The primary structure comprises 468 residues: Chromosomal replication initiator protein DnaA (468 aa).

The segment at 1-84 (MSSSLWLQCL…RFEVGSRPVA (84 aa)) is domain I, interacts with DnaA modulators. Residues 81-104 (RPVAAPKPAPTRTPADVAAESSAP) form a disordered region. A domain II region spans residues 84-131 (AAPKPAPTRTPADVAAESSAPAQLQARKPVHKTWDDDAQAIADINHRS). The interval 132–348 (NVNPKHKFNN…GALNRVIANA (217 aa)) is domain III, AAA+ region. Positions 176, 178, 179, and 180 each coordinate ATP. Residues 349–468 (NFTGRPITID…YSNLIRTLSS (120 aa)) form a domain IV, binds dsDNA region.

It belongs to the DnaA family. Oligomerizes as a right-handed, spiral filament on DNA at oriC.

It localises to the cytoplasm. Functionally, plays an essential role in the initiation and regulation of chromosomal replication. ATP-DnaA binds to the origin of replication (oriC) to initiate formation of the DNA replication initiation complex once per cell cycle. Binds the DnaA box (a 9 base pair repeat at the origin) and separates the double-stranded (ds)DNA. Forms a right-handed helical filament on oriC DNA; dsDNA binds to the exterior of the filament while single-stranded (ss)DNA is stabiized in the filament's interior. The ATP-DnaA-oriC complex binds and stabilizes one strand of the AT-rich DNA unwinding element (DUE), permitting loading of DNA polymerase. After initiation quickly degrades to an ADP-DnaA complex that is not apt for DNA replication. Binds acidic phospholipids. This Vibrio campbellii (strain ATCC BAA-1116) protein is Chromosomal replication initiator protein DnaA.